Here is a 325-residue protein sequence, read N- to C-terminus: Aquaporin-8 (325 aa).

Residues M1 to Y10 are Cytoplasmic-facing. The chain crosses the membrane as a helical span at residues L11–A31. At A32–S52 the chain is on the extracellular side. N39 and N47 each carry an N-linked (GlcNAc...) asparagine glycan. The helical transmembrane segment at K53–F73 threads the bilayer. The Cytoplasmic portion of the chain corresponds to R74–L100. Positions N81–A83 match the NPA 1 motif. A helical membrane pass occupies residues I101–I121. The Extracellular portion of the chain corresponds to P122–Q140. A helical transmembrane segment spans residues G141–A161. The Cytoplasmic segment spans residues E162 to T167. The helical transmembrane segment at F168–W188 threads the bilayer. Topologically, residues T189 to H212 are extracellular. An NPA 2 motif is present at residues N194–A196. The chain crosses the membrane as a helical span at residues W213–L233. Residues K234–T325 are Cytoplasmic-facing. Disordered stretches follow at residues L279–G298 and E305–T325. The span at T286–G298 shows a compositional bias: basic and acidic residues.

The protein belongs to the MIP/aquaporin (TC 1.A.8) family.

The protein resides in the cell membrane. It carries out the reaction H2O2(out) = H2O2(in). It catalyses the reaction H2O(in) = H2O(out). Plasma membrane water channel that regulates the reactive oxygen species (ROS)-signaling pathway through its capacity to act as a membrane channel for hydrogen peroxide uptake. Required for the formation of infection structures and infection, especially on host leaves where it is essential for the penetration into the host. Regulates the expression of proteins related to redox-regulation and intracellular signal transduction and plays a role in the distribution of mitochondria in the hyphae. This chain is Aquaporin-8, found in Botryotinia fuckeliana (strain B05.10) (Noble rot fungus).